The following is a 69-amino-acid chain: Sec-independent protein translocase protein TatA (69 aa).

A helical membrane pass occupies residues 1 to 21 (MFGLGTMEMVIILVIVLVIFG). Residues 44–69 (NAEDDAPAEPEVSKPAAAESTEKKDA) are disordered.

It belongs to the TatA/E family. In terms of assembly, the Tat system comprises two distinct complexes: a TatABC complex, containing multiple copies of TatA, TatB and TatC subunits, and a separate TatA complex, containing only TatA subunits. Substrates initially bind to the TatABC complex, which probably triggers association of the separate TatA complex to form the active translocon.

It is found in the cell inner membrane. Part of the twin-arginine translocation (Tat) system that transports large folded proteins containing a characteristic twin-arginine motif in their signal peptide across membranes. TatA could form the protein-conducting channel of the Tat system. This is Sec-independent protein translocase protein TatA from Magnetococcus marinus (strain ATCC BAA-1437 / JCM 17883 / MC-1).